A 270-amino-acid polypeptide reads, in one-letter code: uncharacterized protein (270 aa).

This is an uncharacterized protein from Escherichia coli (strain K12).